Here is a 425-residue protein sequence, read N- to C-terminus: 2-methylserine hydroxymethyltransferase (425 aa).

Residues leucine 126 and 130-132 contribute to the (6S)-5,6,7,8-tetrahydrofolate site; that span reads GHL. The residue at position 235 (lysine 235) is an N6-(pyridoxal phosphate)lysine. Residue glutamate 251 participates in (6S)-5,6,7,8-tetrahydrofolate binding.

The protein belongs to the SHMT family. Homodimer. Pyridoxal 5'-phosphate is required as a cofactor.

Its subcellular location is the cytoplasm. It carries out the reaction (6R)-5,10-methylene-5,6,7,8-tetrahydrofolate + D-alanine + H2O = 2-methylserine + (6S)-5,6,7,8-tetrahydrofolate. It participates in one-carbon metabolism; tetrahydrofolate interconversion. With respect to regulation, inhibited by hydroxylamine and sodium borohydride. Functionally, catalyzes the reversible interconversion of alpha-methyl-L-serine to D-alanine with tetrahydrofolate (THF) serving as the one-carbon carrier. Cannot use alpha-methyl-D-serine, L-serine, D-serine or L-alanine. The sequence is that of 2-methylserine hydroxymethyltransferase from Paracoccus sp.